The following is a 239-amino-acid chain: Orotidine 5'-phosphate decarboxylase (239 aa).

Residues D15, K36, 63–72 (DLKFHDIPNT), T127, R189, Q198, G218, and R219 contribute to the substrate site. The active-site Proton donor is K65.

This sequence belongs to the OMP decarboxylase family. Type 1 subfamily. As to quaternary structure, homodimer.

It carries out the reaction orotidine 5'-phosphate + H(+) = UMP + CO2. It functions in the pathway pyrimidine metabolism; UMP biosynthesis via de novo pathway; UMP from orotate: step 2/2. Catalyzes the decarboxylation of orotidine 5'-monophosphate (OMP) to uridine 5'-monophosphate (UMP). The protein is Orotidine 5'-phosphate decarboxylase of Prochlorococcus marinus subsp. pastoris (strain CCMP1986 / NIES-2087 / MED4).